We begin with the raw amino-acid sequence, 241 residues long: Small ribosomal subunit protein uS2 (241 aa).

It belongs to the universal ribosomal protein uS2 family.

The chain is Small ribosomal subunit protein uS2 from Cronobacter sakazakii (strain ATCC BAA-894) (Enterobacter sakazakii).